The primary structure comprises 216 residues: uncharacterized protein (216 aa).

Over residues 182–193 (STSNASVNSDDA) the composition is skewed to polar residues. The segment at 182-204 (STSNASVNSDDASTAELGPTSEE) is disordered.

This is an uncharacterized protein from Caenorhabditis elegans.